The following is a 611-amino-acid chain: POU domain, class 6, transcription factor 1 (611 aa).

Positions A62–A93 are disordered. The POU-specific domain maps to E449–E523. The segment at residues K544–S603 is a DNA-binding region (homeobox).

It belongs to the POU transcription factor family. Class-6 subfamily. In the embryo, expressed exclusively in the developing brain, whereas in the adult its expression is restricted to brain, heart, skeletal muscle and lung. In the brain, the highest expression levels are found in specific cell layers of the cortex, the olfactory bulb, the hippocampus and the cerebellum.

The protein localises to the nucleus. In terms of biological role, transcription factor that binds preferentially to a variant of the octamer motif (5'-ATGATAAT-3'). The chain is POU domain, class 6, transcription factor 1 (POU6F1) from Homo sapiens (Human).